Here is a 458-residue protein sequence, read N- to C-terminus: Exodeoxyribonuclease 7 large subunit (458 aa).

This sequence belongs to the XseA family. In terms of assembly, heterooligomer composed of large and small subunits.

The protein localises to the cytoplasm. It carries out the reaction Exonucleolytic cleavage in either 5'- to 3'- or 3'- to 5'-direction to yield nucleoside 5'-phosphates.. Bidirectionally degrades single-stranded DNA into large acid-insoluble oligonucleotides, which are then degraded further into small acid-soluble oligonucleotides. In Escherichia coli O6:H1 (strain CFT073 / ATCC 700928 / UPEC), this protein is Exodeoxyribonuclease 7 large subunit.